A 71-amino-acid polypeptide reads, in one-letter code: Vitellogenin-B2 (71 aa).

Positions 1 to 15 are cleaved as a signal peptide; that stretch reads MRGIILALLLALAGC. Residues 24–71 form the Vitellogenin domain; it reads FSESKTYVYNYEGIILNGIPENGLARSGIKLNCKVELSGYAQRSYMLK.

As to expression, produced by the liver, secreted into the blood and then sequestered by receptor mediated endocytosis into growing oocytes, where it is generally cleaved, giving rise to the respective yolk components.

Its function is as follows. Precursor of the major egg-yolk proteins that are sources of nutrients during early development of oviparous organisms. The chain is Vitellogenin-B2 from Xenopus laevis (African clawed frog).